Here is an 80-residue protein sequence, read N- to C-terminus: DNA-directed RNA polymerase subunit Rpo5 (80 aa).

This sequence belongs to the archaeal Rpo5/eukaryotic RPB5 RNA polymerase subunit family. Part of the RNA polymerase complex.

It localises to the cytoplasm. The catalysed reaction is RNA(n) + a ribonucleoside 5'-triphosphate = RNA(n+1) + diphosphate. Its function is as follows. DNA-dependent RNA polymerase (RNAP) catalyzes the transcription of DNA into RNA using the four ribonucleoside triphosphates as substrates. The polypeptide is DNA-directed RNA polymerase subunit Rpo5 (Thermofilum pendens (strain DSM 2475 / Hrk 5)).